Consider the following 201-residue polypeptide: ATP-dependent Clp protease proteolytic subunit (201 aa).

Ser101 acts as the Nucleophile in catalysis. Residue His126 is part of the active site.

The protein belongs to the peptidase S14 family. As to quaternary structure, component of the chloroplastic Clp protease core complex.

It localises to the plastid. It is found in the chloroplast stroma. The enzyme catalyses Hydrolysis of proteins to small peptides in the presence of ATP and magnesium. alpha-casein is the usual test substrate. In the absence of ATP, only oligopeptides shorter than five residues are hydrolyzed (such as succinyl-Leu-Tyr-|-NHMec, and Leu-Tyr-Leu-|-Tyr-Trp, in which cleavage of the -Tyr-|-Leu- and -Tyr-|-Trp bonds also occurs).. Functionally, cleaves peptides in various proteins in a process that requires ATP hydrolysis. Has a chymotrypsin-like activity. Plays a major role in the degradation of misfolded proteins. The sequence is that of ATP-dependent Clp protease proteolytic subunit from Chlorella vulgaris (Green alga).